Reading from the N-terminus, the 739-residue chain is Phosphoribosylformylglycinamidine synthase subunit PurL (739 aa).

Residue histidine 54 is part of the active site. 2 residues coordinate ATP: tyrosine 57 and lysine 96. Mg(2+) is bound at residue glutamate 98. Residues 99–102 (SHNH) and arginine 121 contribute to the substrate site. Histidine 100 serves as the catalytic Proton acceptor. Mg(2+) is bound at residue aspartate 122. Glutamine 245 is a binding site for substrate. Mg(2+) is bound at residue aspartate 273. 317–319 (ESQ) lines the substrate pocket. 2 residues coordinate ATP: aspartate 500 and glycine 537. Asparagine 538 serves as a coordination point for Mg(2+). Serine 540 contacts substrate.

The protein belongs to the FGAMS family. Monomer. Part of the FGAM synthase complex composed of 1 PurL, 1 PurQ and 2 PurS subunits.

Its subcellular location is the cytoplasm. The catalysed reaction is N(2)-formyl-N(1)-(5-phospho-beta-D-ribosyl)glycinamide + L-glutamine + ATP + H2O = 2-formamido-N(1)-(5-O-phospho-beta-D-ribosyl)acetamidine + L-glutamate + ADP + phosphate + H(+). The protein operates within purine metabolism; IMP biosynthesis via de novo pathway; 5-amino-1-(5-phospho-D-ribosyl)imidazole from N(2)-formyl-N(1)-(5-phospho-D-ribosyl)glycinamide: step 1/2. Functionally, part of the phosphoribosylformylglycinamidine synthase complex involved in the purines biosynthetic pathway. Catalyzes the ATP-dependent conversion of formylglycinamide ribonucleotide (FGAR) and glutamine to yield formylglycinamidine ribonucleotide (FGAM) and glutamate. The FGAM synthase complex is composed of three subunits. PurQ produces an ammonia molecule by converting glutamine to glutamate. PurL transfers the ammonia molecule to FGAR to form FGAM in an ATP-dependent manner. PurS interacts with PurQ and PurL and is thought to assist in the transfer of the ammonia molecule from PurQ to PurL. The sequence is that of Phosphoribosylformylglycinamidine synthase subunit PurL from Bacillus cereus (strain Q1).